Consider the following 495-residue polypeptide: UDP-glycosyltransferase 1 (495 aa).

Histidine 24 serves as the catalytic Proton acceptor. An anthocyanidin is bound at residue histidine 24. The active-site Charge relay is aspartate 129. UDP-alpha-D-glucose-binding residues include glutamine 358, histidine 373, tryptophan 376, asparagine 377, serine 378, and glutamate 381. Glycine 396 is an an anthocyanidin binding site. UDP-alpha-D-glucose contacts are provided by aspartate 397 and glutamine 398.

Belongs to the UDP-glycosyltransferase family.

The catalysed reaction is oleanolate + UDP-alpha-D-glucose = oleanolate 3-O-beta-D-glucoside + UDP + H(+). Its function is as follows. Catalyzes the transfer of a glucose (Glc) moiety from UDP-Glc to the C-3 position of the oleanane sapogenins oleanolate and hederagenin. The monoglucosylated hederagenin 3-O-beta-D-glucoside is a feeding deterrent of the yellow-striped flea beetle (Phyllotreta nemorum). The polypeptide is UDP-glycosyltransferase 1 (Barbarea vulgaris (Yellow rocket)).